Here is a 1021-residue protein sequence, read N- to C-terminus: tRNA wybutosine-synthesizing protein 4 (1021 aa).

Residues Arg-68, Asp-122, Asp-171–Leu-172, and Glu-198 contribute to the S-adenosyl-L-methionine site. Positions Pro-826–Arg-980 constitute a JmjC domain.

It belongs to the methyltransferase superfamily. LCMT family.

It carries out the reaction 7-[(3S)-3-amino-3-carboxypropyl]wyosine(37) in tRNA(Phe) + S-adenosyl-L-methionine = 7-[(3S)-(3-amino-3-methoxycarbonyl)propyl]wyosine(37) in tRNA(Phe) + S-adenosyl-L-homocysteine. The enzyme catalyses 7-[(3S)-(3-amino-3-methoxycarbonyl)propyl]wyosine(37) in tRNA(Phe) + S-adenosyl-L-methionine + CO2 = wybutosine(37) in tRNA(Phe) + S-adenosyl-L-homocysteine + 2 H(+). Its pathway is tRNA modification; wybutosine-tRNA(Phe) biosynthesis. Its function is as follows. Probable S-adenosyl-L-methionine-dependent methyltransferase that acts as a component of the wybutosine biosynthesis pathway. Wybutosine is a hyper modified guanosine with a tricyclic base found at the 3'-position adjacent to the anticodon of eukaryotic phenylalanine tRNA. May methylate the carboxyl group of leucine residues to form alpha-leucine ester residues. This is tRNA wybutosine-synthesizing protein 4 (PPM2) from Gibberella zeae (strain ATCC MYA-4620 / CBS 123657 / FGSC 9075 / NRRL 31084 / PH-1) (Wheat head blight fungus).